We begin with the raw amino-acid sequence, 366 residues long: Histone-lysine N-methyltransferase SETD7 (366 aa).

3 MORN repeats span residues 36–58, 59–81, and 106–128; these read FEGHFVHGEKNGRGKFYFFDGST, LEGFYVDDALQGQGIYTYEDGGS, and FKGQYKDNVRHGVCWIYYPDGGS. The SET domain maps to 214-336; the sequence is ERVYVNDSLI…KDEELTVAYG (123 aa). S-adenosyl-L-methionine-binding positions include 226-228, Asn296, and His297; that span reads AGE.

This sequence belongs to the class V-like SAM-binding methyltransferase superfamily. Histone-lysine methyltransferase family. SET7 subfamily.

The protein resides in the nucleus. It localises to the chromosome. It catalyses the reaction L-lysyl(4)-[histone H3] + S-adenosyl-L-methionine = N(6)-methyl-L-lysyl(4)-[histone H3] + S-adenosyl-L-homocysteine + H(+). The catalysed reaction is L-lysyl-[protein] + S-adenosyl-L-methionine = N(6)-methyl-L-lysyl-[protein] + S-adenosyl-L-homocysteine + H(+). Its function is as follows. Histone methyltransferase that specifically monomethylates 'Lys-4' of histone H3. H3 'Lys-4' methylation represents a specific tag for epigenetic transcriptional activation. Plays a central role in the transcriptional activation of genes. Also has methyltransferase activity toward non-histone proteins. In Xenopus tropicalis (Western clawed frog), this protein is Histone-lysine N-methyltransferase SETD7 (setd7).